A 275-amino-acid chain; its full sequence is Calcyphosin (275 aa).

Residues 59-87 (PGTTQLTQGPAGRTLGQTQASCPEPRPSM) are disordered. 4 consecutive EF-hand domains span residues 107-142 (SGIQ…LGLV), 143-178 (LDQA…PMSQ), 179-214 (AREA…RAHP), and 222-258 (TEDE…VSAS). Residues Asp-120, Asp-122, Ser-124, Ser-126, Glu-131, Asp-156, Asn-158, Ser-160, Thr-162, Glu-167, Asp-192, Ser-194, Asp-196, and Asp-203 each coordinate Ca(2+). Phosphoserine; by PKA is present on Ser-126.

As to quaternary structure, monomer. Does not form oligomers in the presence of calcium.

It localises to the cytoplasm. Calcium-binding protein. May play a role in cellular signaling events (Potential). The polypeptide is Calcyphosin (Homo sapiens (Human)).